Here is a 581-residue protein sequence, read N- to C-terminus: Peptidyl-prolyl cis-trans isomerase FKBP10 (581 aa).

An N-terminal signal peptide occupies residues 1–33; sequence MFLVGSSSHTLHRLRILPLLLLLQTLERGLGRA. PPIase FKBP-type domains are found at residues 61-149, 173-261, and 285-373; these read GDFV…LDVW, SDFV…LDVH, and GDFM…IDFH. N-linked (GlcNAc...) asparagine glycans are attached at residues Asn69, Asn181, Asn293, Asn309, Asn351, Asn392, and Asn406. Positions 398 to 485 constitute a PPIase FKBP-type 4 domain; the sequence is GDFIRYHYNC…LFEVELVSRE (88 aa). EF-hand domains lie at 496 to 531 and 541 to 576; these read WYQD…QVNE and DPDK…DQER. Residues Asp509, Asn511, Asp513, Glu515, Glu520, Asp554, Asn556, Asp558, Lys560, and Glu565 each coordinate Ca(2+). Residues 533 to 581 form a disordered region; that stretch reads KGRLMPGQDPDKTISDMFQNQDRNQDGKITAEELKLKSDEDQERVHEEL. Positions 555-581 are enriched in basic and acidic residues; that stretch reads RNQDGKITAEELKLKSDEDQERVHEEL. The short motif at 578–581 is the Prevents secretion from ER element; that stretch reads HEEL.

N-glycosylated. Post-translationally, phosphorylated. As to expression, expressed in aorta, brain, heart, kidney, lung, spleen and testis. Not detected in liver.

It localises to the endoplasmic reticulum lumen. The catalysed reaction is [protein]-peptidylproline (omega=180) = [protein]-peptidylproline (omega=0). Inhibited by both FK506 and rapamycin, but not by cyclosporin A. In terms of biological role, PPIases accelerate the folding of proteins during protein synthesis. The polypeptide is Peptidyl-prolyl cis-trans isomerase FKBP10 (Fkbp10) (Mus musculus (Mouse)).